The following is a 349-amino-acid chain: Desmethyl-yatein O-methyltransferase (349 aa).

Positions 193, 216, 236, 237, 249, and 250 each coordinate S-adenosyl-L-homocysteine. Catalysis depends on histidine 254, which acts as the Proton acceptor. Catalysis depends on residues glutamate 282 and glutamate 314.

The protein belongs to the class I-like SAM-binding methyltransferase superfamily. Cation-independent O-methyltransferase family. COMT subfamily. Homodimer. As to expression, mostly expressed in stems, and, to a lower extent, in leaves.

The catalysed reaction is (-)-5'-demethylyatein + S-adenosyl-L-methionine = (-)-yatein + S-adenosyl-L-homocysteine + H(+). The protein operates within aromatic compound metabolism; phenylpropanoid biosynthesis. O-methyltransferase involved in the biosynthesis of etoposide, a chemotherapeutic compound of the topoisomerase inhibitor family. Catalyzes the methylation of (-)-5'-demethylyatein to produce (-)-yatein. This chain is Desmethyl-yatein O-methyltransferase, found in Sinopodophyllum hexandrum (Himalayan may apple).